Here is a 234-residue protein sequence, read N- to C-terminus: Adenosine 5'-phosphosulfate reductase (234 aa).

4 residues coordinate [4Fe-4S] cluster: C120, C121, C203, and C206. C229 functions as the Nucleophile; cysteine thiosulfonate intermediate in the catalytic mechanism.

It belongs to the PAPS reductase family. CysH subfamily. It depends on [4Fe-4S] cluster as a cofactor.

The protein localises to the cytoplasm. It catalyses the reaction [thioredoxin]-disulfide + sulfite + AMP + 2 H(+) = adenosine 5'-phosphosulfate + [thioredoxin]-dithiol. The protein operates within sulfur metabolism; hydrogen sulfide biosynthesis; sulfite from sulfate. Its function is as follows. Catalyzes the formation of sulfite from adenosine 5'-phosphosulfate (APS) using thioredoxin as an electron donor. In Bacillus cereus (strain B4264), this protein is Adenosine 5'-phosphosulfate reductase.